The chain runs to 634 residues: MSSSTRKLEVVSPVPADIDIANSVEPLHISEIAKDLNINPLHYDLYGKYKAKVLLSAFDELQGQEDGYYVVVGGITPTPLGEGKSTTTVGLCQALGAYLDKKVVTCLRQPSQGPTFGIKGGAAGGGYSQVIPMDEFNLHLTGDIHAITASNNLLAAAIDTRIFHETSQSDKALFNRLCPPNKEGKRSFSDIMFRRLTKLGISKTSPEELTPEEIKKFARLDIDPASITWRRVMDVNDRFLRKITIGQGPEEKGMTRETGFDISVASEIMAVLALTTSLGDMRERLGKMVIGNSKAGDPITADDLGVGGALTVLMKDAINPTLMQTLEGTPVLVHAGPFANIAHGNSSIVADKIALKLVGPGGFVVTEAGFGSDIGTEKFMNIKCRYSGLTPQCAIVVATVRALKMHGGGPDVVAGRPLDRAYVSENVSLVEAGCVNLAKHISNTKAYGVNVIVAVNMFATDTEAELNAVRKFSMDAGAFDAVVCSHHAHSGKGAVDLGIAVEKACQNITQPLRFLYPLDIGIKDKIEAIAKSYGASGVEYSDQAEKQIEMYTQQGFSNLPICMSKTQYSFSHDASKKGAPSGFVLPIRDVRGSIGAGFIYPLVGTMSTMPGLPTRPCFYEIDIDTETGKVRGLS.

An ATP-binding site is contributed by 78 to 85; sequence TPLGEGKS.

The protein belongs to the formate--tetrahydrofolate ligase family. In terms of assembly, homodimer.

It catalyses the reaction (6S)-5,6,7,8-tetrahydrofolate + formate + ATP = (6R)-10-formyltetrahydrofolate + ADP + phosphate. Its pathway is one-carbon metabolism; tetrahydrofolate interconversion. The sequence is that of Formate--tetrahydrofolate ligase (THFS) from Arabidopsis thaliana (Mouse-ear cress).